A 294-amino-acid chain; its full sequence is Undecaprenyl-diphosphatase (294 aa).

A run of 6 helical transmembrane segments spans residues 39–59, 93–113, 123–143, 198–218, 232–252, and 268–288; these read PGAAFTAIIQIGTELAVILYF, ATLGWNIIVGSIPIVILGFTL, NLWITVTVLLVFGVLLWVVDA, SFLMAIPAVFGSGLLETVKAV, PTLVAMVISFVLGYIVIIGFL, and IGLAVVVALLLIVGVLPAIDP.

The protein belongs to the UppP family.

It is found in the cell membrane. The catalysed reaction is di-trans,octa-cis-undecaprenyl diphosphate + H2O = di-trans,octa-cis-undecaprenyl phosphate + phosphate + H(+). Functionally, catalyzes the dephosphorylation of undecaprenyl diphosphate (UPP). Confers resistance to bacitracin. The sequence is that of Undecaprenyl-diphosphatase from Bifidobacterium longum subsp. infantis (strain ATCC 15697 / DSM 20088 / JCM 1222 / NCTC 11817 / S12).